A 125-amino-acid polypeptide reads, in one-letter code: uncharacterized protein (125 aa).

This is an uncharacterized protein from Pasteurella multocida (strain Pm70).